The following is a 155-amino-acid chain: Ribosomal RNA large subunit methyltransferase H (155 aa).

Residues leucine 73, glycine 104, and 123 to 128 (ISKMTF) contribute to the S-adenosyl-L-methionine site.

It belongs to the RNA methyltransferase RlmH family. Homodimer.

The protein resides in the cytoplasm. It catalyses the reaction pseudouridine(1915) in 23S rRNA + S-adenosyl-L-methionine = N(3)-methylpseudouridine(1915) in 23S rRNA + S-adenosyl-L-homocysteine + H(+). Functionally, specifically methylates the pseudouridine at position 1915 (m3Psi1915) in 23S rRNA. In Francisella philomiragia subsp. philomiragia (strain ATCC 25017 / CCUG 19701 / FSC 153 / O#319-036), this protein is Ribosomal RNA large subunit methyltransferase H.